Reading from the N-terminus, the 522-residue chain is Probable cytochrome P450 12e1, mitochondrial (522 aa).

Cys468 contacts heme.

The protein belongs to the cytochrome P450 family. It depends on heme as a cofactor.

Its subcellular location is the mitochondrion membrane. This Drosophila melanogaster (Fruit fly) protein is Probable cytochrome P450 12e1, mitochondrial (Cyp12e1).